The chain runs to 805 residues: Mediator of RNA polymerase II transcription subunit 25 (805 aa).

2 disordered regions span residues 308–332 and 647–691; these read NQMP…PQNT and QQPQ…NPQL. Positions 647-678 are enriched in low complexity; that stretch reads QQPQQAASQAPPQATQTTVQAPGQPQNPQPGA. The LXXLL motif motif lies at 691–695; sequence LRNLL.

The protein belongs to the Mediator complex subunit 25 family. As to quaternary structure, component of the Mediator complex.

Its subcellular location is the nucleus. Component of the Mediator complex, a coactivator involved in the regulated transcription of nearly all RNA polymerase II-dependent genes. Mediator functions as a bridge to convey information from gene-specific regulatory proteins to the basal RNA polymerase II transcription machinery. Mediator is recruited to promoters by direct interactions with regulatory proteins and serves as a scaffold for the assembly of a functional preinitiation complex with RNA polymerase II and the general transcription factors. The sequence is that of Mediator of RNA polymerase II transcription subunit 25 (med25) from Xenopus tropicalis (Western clawed frog).